The sequence spans 672 residues: Probable urocanate hydratase (672 aa).

Residues 128-129, Gln206, 253-255, Glu273, 318-319, 340-344, 351-352, Tyr400, and Gly592 each bind NAD(+); these read GG, GMS, NV, QTSLH, and YY.

This sequence belongs to the urocanase family. The cofactor is NAD(+).

It carries out the reaction 4-imidazolone-5-propanoate = trans-urocanate + H2O. Its pathway is amino-acid degradation; L-histidine degradation into L-glutamate; N-formimidoyl-L-glutamate from L-histidine: step 2/3. This is Probable urocanate hydratase (uroc1) from Dictyostelium discoideum (Social amoeba).